The sequence spans 446 residues: Histidinol dehydrogenase homolog (446 aa).

H266 is a binding site for Zn(2+). Catalysis depends on proton acceptor residues E334 and H335. Position 427 (H427) interacts with Zn(2+).

It belongs to the histidinol dehydrogenase family. Zn(2+) serves as cofactor.

This is Histidinol dehydrogenase homolog from Colwellia psychrerythraea (strain 34H / ATCC BAA-681) (Vibrio psychroerythus).